We begin with the raw amino-acid sequence, 987 residues long: Leucine--tRNA ligase (987 aa).

The 'HIGH' region motif lies at 69–80 (PYPSGKGLHVGH). A 'KMSKS' region motif is present at residues 760-764 (KMGKS). Position 763 (K763) interacts with ATP.

The protein belongs to the class-I aminoacyl-tRNA synthetase family.

Its subcellular location is the cytoplasm. The catalysed reaction is tRNA(Leu) + L-leucine + ATP = L-leucyl-tRNA(Leu) + AMP + diphosphate. The chain is Leucine--tRNA ligase from Bifidobacterium longum (strain NCC 2705).